The sequence spans 112 residues: UPF0102 protein CHAB381_0216 (112 aa).

The protein belongs to the UPF0102 family.

The protein is UPF0102 protein CHAB381_0216 of Campylobacter hominis (strain ATCC BAA-381 / DSM 21671 / CCUG 45161 / LMG 19568 / NCTC 13146 / CH001A).